The chain runs to 910 residues: DnaJ-like protein MG200 homolog (910 aa).

A J domain is found at 4-73 (AKRDYYEVLG…RANYDKYGHD (70 aa)). Disordered stretches follow at residues 102–160 (DNLS…DDIP), 260–408 (TEPS…LEQD), and 451–486 (VLSD…STAP). Basic residues predominate over residues 111–121 (KKEKTKTKKKG). The segment covering 273–283 (DSDAVTAATTV) has biased composition (low complexity). A compositionally biased stretch (acidic residues) spans 357 to 379 (SDEADATNEPTEQDTISEPEQET). The span at 451–462 (VLSDQNPNPQTP) shows a compositional bias: polar residues.

This Mycoplasma pneumoniae (strain ATCC 29342 / M129 / Subtype 1) (Mycoplasmoides pneumoniae) protein is DnaJ-like protein MG200 homolog.